A 350-amino-acid chain; its full sequence is S-adenosylmethionine:tRNA ribosyltransferase-isomerase (350 aa).

It belongs to the QueA family. Monomer.

Its subcellular location is the cytoplasm. The catalysed reaction is 7-aminomethyl-7-carbaguanosine(34) in tRNA + S-adenosyl-L-methionine = epoxyqueuosine(34) in tRNA + adenine + L-methionine + 2 H(+). Its pathway is tRNA modification; tRNA-queuosine biosynthesis. Transfers and isomerizes the ribose moiety from AdoMet to the 7-aminomethyl group of 7-deazaguanine (preQ1-tRNA) to give epoxyqueuosine (oQ-tRNA). In Aliivibrio fischeri (strain MJ11) (Vibrio fischeri), this protein is S-adenosylmethionine:tRNA ribosyltransferase-isomerase.